Consider the following 494-residue polypeptide: Tyrosinase (494 aa).

Histidine 38, histidine 53, cysteine 64, histidine 224, histidine 228, and histidine 256 together coordinate Cu cation.

The protein belongs to the tyrosinase family. It depends on Cu(2+) as a cofactor.

It catalyses the reaction 2 L-dopa + O2 = 2 L-dopaquinone + 2 H2O. The catalysed reaction is L-tyrosine + O2 = L-dopaquinone + H2O. The protein is Tyrosinase (mepA) of Rhizobium meliloti (Ensifer meliloti).